Here is a 455-residue protein sequence, read N- to C-terminus: Keratin, type I cuticular Ha5 (455 aa).

Residues 1-97 (MASKCLKAGF…FGEGILTGNE (97 aa)) form a head region. The 312-residue stretch at 97-408 (EKETMQSLND…GLLESEDSKL (312 aa)) folds into the IF rod domain. Residues 98-132 (KETMQSLNDRLAGYLEKVRQLEQENASLESRIREW) are coil 1A. A linker 1 region spans residues 133–143 (CEQQVPYMCPD). Positions 144–244 (YQSYFRTIEE…HEEEVNSLRC (101 aa)) are coil 1B. Residues 245-260 (QLGDRLNVEVDAAPPV) form a linker 12 region. The segment at 261–404 (DLNRVLEEMR…NTYRGLLESE (144 aa)) is coil 2. The interval 405–455 (DSKLPCNPCAPDYSPSKSCLPCLPAASCGPSAARTNCSPRPICVPCPGGRF) is tail.

It belongs to the intermediate filament family. As to expression, early expression in the hair follicle, mainly found in supramatricial cells and lowermost cortical cells of the hair bulb.

The chain is Keratin, type I cuticular Ha5 (KRT35) from Homo sapiens (Human).